The chain runs to 220 residues: UPF0319 protein YccT (220 aa).

The signal sequence occupies residues 1–20 (MKTGIVTTLIALCLPVSVFA).

It belongs to the UPF0319 family.

The protein is UPF0319 protein YccT of Escherichia coli O139:H28 (strain E24377A / ETEC).